The chain runs to 185 residues: Protein LURP-one-related 13 (185 aa).

This sequence belongs to the LOR family.

In terms of biological role, might be related to the phospholipid scramblase and tubby-like superfamily of membrane tethered transcription factors. The polypeptide is Protein LURP-one-related 13 (Arabidopsis thaliana (Mouse-ear cress)).